The primary structure comprises 198 residues: Regulation of enolase protein 1 (198 aa).

It is found in the cytoplasm. Its function is as follows. Functions in the galactose metabolic pathway via the GAL83 protein and that it may control the level of ENO1. This Saccharomyces cerevisiae (strain ATCC 204508 / S288c) (Baker's yeast) protein is Regulation of enolase protein 1 (REE1).